The chain runs to 380 residues: L-lactate dehydrogenase (380 aa).

The region spanning 1-380 (MIISASTDYR…SADSLVQGLR (380 aa)) is the FMN hydroxy acid dehydrogenase domain. Tyrosine 24 lines the substrate pocket. Residues serine 106 and glutamine 127 each coordinate FMN. Tyrosine 129 provides a ligand contact to substrate. Residue threonine 155 participates in FMN binding. Position 164 (arginine 164) interacts with substrate. Lysine 251 lines the FMN pocket. Histidine 275 serves as the catalytic Proton acceptor. Arginine 278 is a substrate binding site. 306–330 (DSGIRSGLDVVRMIALGADGVLLGR) is an FMN binding site.

The protein belongs to the FMN-dependent alpha-hydroxy acid dehydrogenase family. It depends on FMN as a cofactor.

It localises to the cell inner membrane. It catalyses the reaction (S)-lactate + A = pyruvate + AH2. In terms of biological role, catalyzes the conversion of L-lactate to pyruvate. Is coupled to the respiratory chain. This is L-lactate dehydrogenase from Serratia proteamaculans (strain 568).